The primary structure comprises 595 residues: Epsin-2 (595 aa).

A 1,2-diacyl-sn-glycero-3-phospho-(1D-myo-inositol-4,5-bisphosphate) is bound by residues arginine 8, lysine 11, arginine 25, asparagine 30, arginine 63, and histidine 73. The 133-residue stretch at 12 to 144 (NIVNNYSEAE…KDEERLKVER (133 aa)) folds into the ENTH domain. The span at 164 to 183 (NQITFGRGSSQPNLSTSYSE) shows a compositional bias: polar residues. 4 disordered regions span residues 164–254 (NQIT…RLRR), 267–289 (SRRD…PGSH), 305–396 (SGPV…KPSS), and 423–469 (TSKK…PESF). The residue at position 170 (arginine 170) is an Omega-N-methylarginine. 3 positions are modified to phosphoserine: serine 173, serine 192, and serine 195. 2 stretches are compositionally biased toward polar residues: residues 197–216 (HGST…PQTS) and 235–245 (EQSSESVQTAR). UIM domains are found at residues 218 to 237 (EEEL…AEQS) and 255 to 274 (GDDL…TVKV). The span at 306-337 (GPVTQKTEPWSAGASANQTNPWGGTVAPSNIT) shows a compositional bias: polar residues. Repeat copies occupy residues 313–315 (EPW), 325–327 (NPW), 338–340 (DPW), and 352–354 (DPW). The interval 313-389 (EPWSAGASAN…SNAGKTTDAW (77 aa)) is 6 X 3 AA repeats of [DE]-P-W. Over residues 358-367 (TTASTQSVPK) the composition is skewed to polar residues. Repeat unit 5 spans residues 370–372 (DPW). Positions 374-384 (ASQQPASNAGK) are enriched in polar residues. Repeat unit 6 spans residues 387 to 389 (DAW). Residue serine 443 is modified to Phosphoserine. The segment covering 449–460 (SQSLTSASSKPS) has biased composition (low complexity). Threonine 465 carries the post-translational modification Phosphothreonine. A run of 2 repeats spans residues 494–496 (NPF) and 508–510 (NPF). The segment at 494–593 (NPFLAPGAAA…AQSTGTTNPF (100 aa)) is 3 X 3 AA repeats of N-P-F. Serine 526 is subject to Phosphoserine. Copy 3 of the repeat occupies 591–593 (NPF).

This sequence belongs to the epsin family. As to quaternary structure, binds EPS15, AP-2 and clathrin. Interacts with UBQLN2. Interacts with ITSN1. In terms of processing, ubiquitinated.

It localises to the cytoplasm. Its function is as follows. Plays a role in the formation of clathrin-coated invaginations and endocytosis. The sequence is that of Epsin-2 (Epn2) from Mus musculus (Mouse).